The primary structure comprises 175 residues: Alkyl hydroperoxide reductase AhpD (175 aa).

Cys-131 serves as the catalytic Proton donor. Cys-131 and Cys-134 are disulfide-bonded. Cys-134 serves as the catalytic Cysteine sulfenic acid (-SOH) intermediate.

The protein belongs to the AhpD family.

The catalysed reaction is N(6)-[(R)-dihydrolipoyl]-L-lysyl-[lipoyl-carrier protein] + a hydroperoxide = N(6)-[(R)-lipoyl]-L-lysyl-[lipoyl-carrier protein] + an alcohol + H2O. Its function is as follows. Antioxidant protein with alkyl hydroperoxidase activity. Required for the reduction of the AhpC active site cysteine residues and for the regeneration of the AhpC enzyme activity. The sequence is that of Alkyl hydroperoxide reductase AhpD from Brucella melitensis biotype 1 (strain ATCC 23456 / CCUG 17765 / NCTC 10094 / 16M).